Here is a 38-residue protein sequence, read N- to C-terminus: Large ribosomal subunit protein bL36 (38 aa).

This sequence belongs to the bacterial ribosomal protein bL36 family.

The protein is Large ribosomal subunit protein bL36 of Cellvibrio japonicus (strain Ueda107) (Pseudomonas fluorescens subsp. cellulosa).